We begin with the raw amino-acid sequence, 202 residues long: LexA repressor (202 aa).

The H-T-H motif DNA-binding region spans 28–48 (RAEIAQRLGFRSPNAAEEHLK). Active-site for autocatalytic cleavage activity residues include Ser119 and Lys156.

This sequence belongs to the peptidase S24 family. In terms of assembly, homodimer.

The catalysed reaction is Hydrolysis of Ala-|-Gly bond in repressor LexA.. Represses a number of genes involved in the response to DNA damage (SOS response), including recA and lexA. Binds to the 16 bp palindromic sequence 5'-CTGTATATATATACAG-3'. In the presence of single-stranded DNA, RecA interacts with LexA causing an autocatalytic cleavage which disrupts the DNA-binding part of LexA, leading to derepression of the SOS regulon and eventually DNA repair. The polypeptide is LexA repressor (Escherichia fergusonii (strain ATCC 35469 / DSM 13698 / CCUG 18766 / IAM 14443 / JCM 21226 / LMG 7866 / NBRC 102419 / NCTC 12128 / CDC 0568-73)).